Consider the following 489-residue polypeptide: Glutamate--tRNA ligase (489 aa).

The 'HIGH' region motif lies at 11–21 (PSPTGHLHIGG). A 'KMSKS' region motif is present at residues 253–257 (KLSKR). Position 256 (Lys-256) interacts with ATP.

This sequence belongs to the class-I aminoacyl-tRNA synthetase family. Glutamate--tRNA ligase type 1 subfamily. Monomer.

The protein resides in the cytoplasm. It catalyses the reaction tRNA(Glu) + L-glutamate + ATP = L-glutamyl-tRNA(Glu) + AMP + diphosphate. In terms of biological role, catalyzes the attachment of glutamate to tRNA(Glu) in a two-step reaction: glutamate is first activated by ATP to form Glu-AMP and then transferred to the acceptor end of tRNA(Glu). This is Glutamate--tRNA ligase from Geobacillus stearothermophilus (Bacillus stearothermophilus).